The chain runs to 470 residues: MNPNQKIITIGSICMAIGIISLILQIGNIISIWVSHSIQTGSQNHTGICNQRIITYENSTWVNQTYVNISNTNVVAGKDTTSMTLAGNSSLCPIRGWAIYSKDNSIRIGSKGDVFVIREPFISCSHLECRTFFLTQGALLNDKHSNGTVKDRSPYRALMSCPIGEAPSPYNSRFESVAWSASACHDGMGWLTIGISGPDDGAVAVLKYNGIITETIKSWRKQILRTQESECVCVNGSCFTIMTDGPSDGQASYRIFKIEKGKITKSIELDAPNSHYEECSCYPDNGTVMCVCRDNWHGSNRPWVSFNQNLDYQIGYICSGVFGDNPRPKDGKGSCDPVNVDGADGVKGFSYRYGNGVWIGRTKSNSSRKGFEMIWDPNGWTDTDSNFLVKQDVVAMTDWSGYSGSFVQHPELTGLDCMRPCFWVELIRGRPREKTTIWTSGSSISFCGVNSDTVNWSWPDGAELPFTIDK.

Residues 1 to 6 (MNPNQK) are Intravirion-facing. Residues 7–27 (IITIGSICMAIGIISLILQIG) form a helical membrane-spanning segment. Residues 11–33 (GSICMAIGIISLILQIGNIISIW) are involved in apical transport and lipid raft association. Topologically, residues 28 to 470 (NIISIWVSHS…GAELPFTIDK (443 aa)) are virion surface. Positions 36–90 (HSIQTGSQNHTGICNQRIITYENSTWVNQTYVNISNTNVVAGKDTTSMTLAGNSS) are hypervariable stalk region. Residues N44, N58, N63, N68, and N88 are each glycosylated (N-linked (GlcNAc...) asparagine; by host). The interval 91 to 470 (LCPIRGWAIY…GAELPFTIDK (380 aa)) is head of neuraminidase. 8 cysteine pairs are disulfide-bonded: C92–C417, C124–C129, C184–C231, C233–C238, C279–C292, C281–C290, C318–C335, and C421–C447. R118 contacts substrate. A glycan (N-linked (GlcNAc...) asparagine; by host) is linked at N146. D151 serves as the catalytic Proton donor/acceptor. R152 is a binding site for substrate. N235 carries an N-linked (GlcNAc...) asparagine; by host glycan. Residue 277-278 (EE) coordinates substrate. N285 carries N-linked (GlcNAc...) asparagine; by host glycosylation. Residue R293 coordinates substrate. Positions 294, 298, and 324 each coordinate Ca(2+). N365 is a glycosylation site (N-linked (GlcNAc...) asparagine; by host). R368 contributes to the substrate binding site. The Nucleophile role is filled by Y402. The N-linked (GlcNAc...) asparagine; by host glycan is linked to N455.

It belongs to the glycosyl hydrolase 34 family. Homotetramer. The cofactor is Ca(2+). Post-translationally, N-glycosylated.

Its subcellular location is the virion membrane. It localises to the host apical cell membrane. It catalyses the reaction Hydrolysis of alpha-(2-&gt;3)-, alpha-(2-&gt;6)-, alpha-(2-&gt;8)- glycosidic linkages of terminal sialic acid residues in oligosaccharides, glycoproteins, glycolipids, colominic acid and synthetic substrates.. Its activity is regulated as follows. Inhibited by the neuraminidase inhibitors zanamivir (Relenza) and oseltamivir (Tamiflu). These drugs interfere with the release of progeny virus from infected cells and are effective against all influenza strains. Resistance to neuraminidase inhibitors is quite rare. In terms of biological role, catalyzes the removal of terminal sialic acid residues from viral and cellular glycoconjugates. Cleaves off the terminal sialic acids on the glycosylated HA during virus budding to facilitate virus release. Additionally helps virus spread through the circulation by further removing sialic acids from the cell surface. These cleavages prevent self-aggregation and ensure the efficient spread of the progeny virus from cell to cell. Otherwise, infection would be limited to one round of replication. Described as a receptor-destroying enzyme because it cleaves a terminal sialic acid from the cellular receptors. May facilitate viral invasion of the upper airways by cleaving the sialic acid moieties on the mucin of the airway epithelial cells. Likely to plays a role in the budding process through its association with lipid rafts during intracellular transport. May additionally display a raft-association independent effect on budding. Plays a role in the determination of host range restriction on replication and virulence. Sialidase activity in late endosome/lysosome traffic seems to enhance virus replication. The sequence is that of Neuraminidase from Influenza A virus (strain A/Kiev/59/1979 H1N1).